A 339-amino-acid polypeptide reads, in one-letter code: Ketol-acid reductoisomerase (NADP(+)) (339 aa).

Positions 1–182 constitute a KARI N-terminal Rossmann domain; the sequence is MKVYYDADCD…GGGRSGIIET (182 aa). NADP(+) contacts are provided by residues 24-27, R48, S51, S53, and 83-86; these read YGSQ and DEHQ. H108 is a catalytic residue. NADP(+) is bound at residue G134. One can recognise a KARI C-terminal knotted domain in the interval 183–328; sequence NFREECETDL…AKLRAMMPWI (146 aa). The Mg(2+) site is built by D191, E195, E227, and E231. S252 serves as a coordination point for substrate.

Belongs to the ketol-acid reductoisomerase family. Mg(2+) serves as cofactor.

The enzyme catalyses (2R)-2,3-dihydroxy-3-methylbutanoate + NADP(+) = (2S)-2-acetolactate + NADPH + H(+). The catalysed reaction is (2R,3R)-2,3-dihydroxy-3-methylpentanoate + NADP(+) = (S)-2-ethyl-2-hydroxy-3-oxobutanoate + NADPH + H(+). It participates in amino-acid biosynthesis; L-isoleucine biosynthesis; L-isoleucine from 2-oxobutanoate: step 2/4. The protein operates within amino-acid biosynthesis; L-valine biosynthesis; L-valine from pyruvate: step 2/4. Its function is as follows. Involved in the biosynthesis of branched-chain amino acids (BCAA). Catalyzes an alkyl-migration followed by a ketol-acid reduction of (S)-2-acetolactate (S2AL) to yield (R)-2,3-dihydroxy-isovalerate. In the isomerase reaction, S2AL is rearranged via a Mg-dependent methyl migration to produce 3-hydroxy-3-methyl-2-ketobutyrate (HMKB). In the reductase reaction, this 2-ketoacid undergoes a metal-dependent reduction by NADPH to yield (R)-2,3-dihydroxy-isovalerate. The protein is Ketol-acid reductoisomerase (NADP(+)) of Novosphingobium aromaticivorans (strain ATCC 700278 / DSM 12444 / CCUG 56034 / CIP 105152 / NBRC 16084 / F199).